Here is a 186-residue protein sequence, read N- to C-terminus: Tumor necrosis factor alpha-induced protein 8-like protein 1 (186 aa).

It belongs to the TNFAIP8 family.

Its subcellular location is the cytoplasm. In Gallus gallus (Chicken), this protein is Tumor necrosis factor alpha-induced protein 8-like protein 1 (TNFAIP8L1).